Consider the following 199-residue polypeptide: Ribonuclease HII (199 aa).

In terms of domain architecture, RNase H type-2 spans 9–198; it reads QFVAGVDEVG…VRAAIEQMNL (190 aa). Positions 15, 16, and 107 each coordinate a divalent metal cation.

Belongs to the RNase HII family. The cofactor is Mn(2+). Mg(2+) is required as a cofactor.

It localises to the cytoplasm. It catalyses the reaction Endonucleolytic cleavage to 5'-phosphomonoester.. Its function is as follows. Endonuclease that specifically degrades the RNA of RNA-DNA hybrids. The chain is Ribonuclease HII from Saccharophagus degradans (strain 2-40 / ATCC 43961 / DSM 17024).